A 356-amino-acid chain; its full sequence is DNA polymerase IV (356 aa).

The 182-residue stretch at 7–188 (IIHIDMDCFY…LPLKKIPGVG (182 aa)) folds into the UmuC domain. Asp-11 and Asp-106 together coordinate Mg(2+). Residue Glu-107 is part of the active site.

Belongs to the DNA polymerase type-Y family. As to quaternary structure, monomer. It depends on Mg(2+) as a cofactor.

It localises to the cytoplasm. The enzyme catalyses DNA(n) + a 2'-deoxyribonucleoside 5'-triphosphate = DNA(n+1) + diphosphate. In terms of biological role, poorly processive, error-prone DNA polymerase involved in untargeted mutagenesis. Copies undamaged DNA at stalled replication forks, which arise in vivo from mismatched or misaligned primer ends. These misaligned primers can be extended by PolIV. Exhibits no 3'-5' exonuclease (proofreading) activity. May be involved in translesional synthesis, in conjunction with the beta clamp from PolIII. In Actinobacillus pleuropneumoniae serotype 3 (strain JL03), this protein is DNA polymerase IV.